A 292-amino-acid chain; its full sequence is MNKDIATPIRTKEILKKYGFSFKKSLGQNFLIDTNILDRIVDHAEVTDETGVIEIGPGIGALTEQLAKRAKKVTAFEIDQRLLPILNDTLSPYDNVTIIHQDVLKADVGKVIEENFADCKEVMVVANLPYYVTTPIIMKLLEENLPLKGIVVMLQKEVADRMAAIPSSKEYNSLSIAVQYYTEAKTVMVVPKTVFVPQPNVDSAVIKLTVRETPAVSVENDEFFFQLIRASFGQRRKTLMNNLMNNLPDGKQHKAIIEEALQTADIDGKRRGESLSIEEFARLSNVLQKALF.

S-adenosyl-L-methionine is bound by residues N29, L31, G56, E77, D102, and N127.

This sequence belongs to the class I-like SAM-binding methyltransferase superfamily. rRNA adenine N(6)-methyltransferase family. RsmA subfamily.

It localises to the cytoplasm. The catalysed reaction is adenosine(1518)/adenosine(1519) in 16S rRNA + 4 S-adenosyl-L-methionine = N(6)-dimethyladenosine(1518)/N(6)-dimethyladenosine(1519) in 16S rRNA + 4 S-adenosyl-L-homocysteine + 4 H(+). Functionally, specifically dimethylates two adjacent adenosines (A1518 and A1519) in the loop of a conserved hairpin near the 3'-end of 16S rRNA in the 30S particle. May play a critical role in biogenesis of 30S subunits. The polypeptide is Ribosomal RNA small subunit methyltransferase A (Bacillus pumilus (strain SAFR-032)).